The sequence spans 118 residues: Small ribosomal subunit protein uS13 (118 aa).

The tract at residues 93–118 (RSLPVRGQRSKTNARTRKGPRKPIKK) is disordered.

It belongs to the universal ribosomal protein uS13 family. As to quaternary structure, part of the 30S ribosomal subunit. Forms a loose heterodimer with protein S19. Forms two bridges to the 50S subunit in the 70S ribosome.

Located at the top of the head of the 30S subunit, it contacts several helices of the 16S rRNA. In the 70S ribosome it contacts the 23S rRNA (bridge B1a) and protein L5 of the 50S subunit (bridge B1b), connecting the 2 subunits; these bridges are implicated in subunit movement. Contacts the tRNAs in the A and P-sites. The sequence is that of Small ribosomal subunit protein uS13 from Teredinibacter turnerae (strain ATCC 39867 / T7901).